Here is a 230-residue protein sequence, read N- to C-terminus: Peptidyl-prolyl cis-trans isomerase FKBP16-4, chloroplastic (230 aa).

The N-terminal 56 residues, 1–56 (MILTMKLVHPLHHSLSSSIPFPSRKRQSKPYRCSLPSPGCEKVIRTETVLPPAPVS), are a transit peptide targeting the chloroplast. Residues 123-217 (GSRVAVHYVA…ELDIELLSIK (95 aa)) form the PPIase FKBP-type domain.

This sequence belongs to the FKBP-type PPIase family.

Its subcellular location is the plastid. It is found in the chloroplast thylakoid lumen. The catalysed reaction is [protein]-peptidylproline (omega=180) = [protein]-peptidylproline (omega=0). In terms of biological role, PPIases accelerate the folding of proteins. It catalyzes the cis-trans isomerization of proline imidic peptide bonds in oligopeptides. The protein is Peptidyl-prolyl cis-trans isomerase FKBP16-4, chloroplastic (FKBP16-4) of Arabidopsis thaliana (Mouse-ear cress).